Here is a 257-residue protein sequence, read N- to C-terminus: Phosphate import ATP-binding protein PstB (257 aa).

The ABC transporter domain maps to 11 to 252 (LEVRDLNFFY…PQKKATEDYI (242 aa)). 43–50 (GPSGCGKS) serves as a coordination point for ATP.

This sequence belongs to the ABC transporter superfamily. Phosphate importer (TC 3.A.1.7) family. In terms of assembly, the complex is composed of two ATP-binding proteins (PstB), two transmembrane proteins (PstC and PstA) and a solute-binding protein (PstS).

It localises to the cell inner membrane. The catalysed reaction is phosphate(out) + ATP + H2O = ADP + 2 phosphate(in) + H(+). Functionally, part of the ABC transporter complex PstSACB involved in phosphate import. Responsible for energy coupling to the transport system. The sequence is that of Phosphate import ATP-binding protein PstB from Chromobacterium violaceum (strain ATCC 12472 / DSM 30191 / JCM 1249 / CCUG 213 / NBRC 12614 / NCIMB 9131 / NCTC 9757 / MK).